The chain runs to 138 residues: Transcription antitermination protein NusB (138 aa).

Belongs to the NusB family.

In terms of biological role, involved in transcription antitermination. Required for transcription of ribosomal RNA (rRNA) genes. Binds specifically to the boxA antiterminator sequence of the ribosomal RNA (rrn) operons. The polypeptide is Transcription antitermination protein NusB (Tolumonas auensis (strain DSM 9187 / NBRC 110442 / TA 4)).